Consider the following 200-residue polypeptide: Recombination protein RecR (200 aa).

The segment at 57–72 (CQECRTFTEQDVCHIC) adopts a C4-type zinc-finger fold. One can recognise a Toprim domain in the interval 81 to 176 (GQLCVVESPA…TASRIAHGVP (96 aa)).

The protein belongs to the RecR family.

May play a role in DNA repair. It seems to be involved in an RecBC-independent recombinational process of DNA repair. It may act with RecF and RecO. The chain is Recombination protein RecR from Vibrio cholerae serotype O1 (strain ATCC 39541 / Classical Ogawa 395 / O395).